Consider the following 427-residue polypeptide: D-inositol 3-phosphate glycosyltransferase (427 aa).

Residue H12 participates in 1D-myo-inositol 3-phosphate binding. UDP-N-acetyl-alpha-D-glucosamine contacts are provided by residues 18-19 (QP) and G26. 1D-myo-inositol 3-phosphate-binding positions include 23-28 (DAGGMN), K81, Y113, T137, and R157. Residues R234, K239, and R297 each contribute to the UDP-N-acetyl-alpha-D-glucosamine site. Residues Y306, Q307, and A309 each contribute to the Mg(2+) site. The UDP-N-acetyl-alpha-D-glucosamine site is built by E319 and E327. A Mg(2+)-binding site is contributed by T333.

Belongs to the glycosyltransferase group 1 family. MshA subfamily. Homodimer.

The catalysed reaction is 1D-myo-inositol 3-phosphate + UDP-N-acetyl-alpha-D-glucosamine = 1D-myo-inositol 2-acetamido-2-deoxy-alpha-D-glucopyranoside 3-phosphate + UDP + H(+). In terms of biological role, catalyzes the transfer of a N-acetyl-glucosamine moiety to 1D-myo-inositol 3-phosphate to produce 1D-myo-inositol 2-acetamido-2-deoxy-glucopyranoside 3-phosphate in the mycothiol biosynthesis pathway. The polypeptide is D-inositol 3-phosphate glycosyltransferase (Corynebacterium diphtheriae (strain ATCC 700971 / NCTC 13129 / Biotype gravis)).